A 347-amino-acid chain; its full sequence is Elongation factor Ts (347 aa).

Residues 80-83 (TDFV) form an involved in Mg(2+) ion dislocation from EF-Tu region.

The protein belongs to the EF-Ts family.

It localises to the cytoplasm. Functionally, associates with the EF-Tu.GDP complex and induces the exchange of GDP to GTP. It remains bound to the aminoacyl-tRNA.EF-Tu.GTP complex up to the GTP hydrolysis stage on the ribosome. In Streptococcus sanguinis (strain SK36), this protein is Elongation factor Ts.